Here is a 73-residue protein sequence, read N- to C-terminus: U3-agatoxin-Ao1k (73 aa).

The signal sequence occupies residues 1 to 20 (MRTIISLLLLSAMVFAVIEA). Residues 21–34 (ISLEEGLQLFEGER) constitute a propeptide that is removed on maturation. 4 disulfides stabilise this stretch: Cys36–Cys52, Cys43–Cys57, Cys51–Cys67, and Cys59–Cys65. Position 71 is a serine amide (Ser71).

Belongs to the neurotoxin 07 (Beta/delta-agtx) family. 03 (aga-4) subfamily. Aga sub-subfamily. In terms of tissue distribution, expressed by the venom gland.

The protein localises to the secreted. Its function is as follows. Insecticidal neurotoxin that modulates the insect Nav channel (DmNaV1/tipE (para/tipE)) in a unique manner, with both the activation and inactivation processes being affected. The voltage dependence of activation is shifted toward more hyperpolarized potentials (analogous to site 4 toxins) and a non-inactivating persistent sodium current is induced (site 3-like action). Interestingly, both effects take place in a voltage-dependent manner, producing a bell-shaped curve between -80 and 0 mV. Compared to beta/delta-agatoxin-1 to -3, this toxin appears to affect the insect sodium channel only weakly. This is U3-agatoxin-Ao1k from Agelena orientalis (Funnel-web spider).